The primary structure comprises 371 residues: GDP-mannose transporter (371 aa).

At 1–51 (MGVISFYLIGQLLYLIRKKYTTTYRQQQQHQYNMDSKHSTSSSSSGSLATR) the chain is on the cytoplasmic side. Residues 52–72 (ISNSGPISIAAYCLSSILMTV) form a helical membrane-spanning segment. At 73 to 80 (TNKYVLSG) the chain is on the lumenal side. The chain crosses the membrane as a helical span at residues 81–101 (FSFNLNFFLLAVQSIVCIVTI). Topologically, residues 102-121 (GSLKSLNIITYRQFNKDEAK) are cytoplasmic. The helical transmembrane segment at 122 to 138 (KWSPIAFLLVAMIYTSS) threads the bilayer. The Lumenal portion of the chain corresponds to 139–145 (KALQYLS). The chain crosses the membrane as a helical span at residues 146–162 (IPVYTIFKNLTIILIAY). Topologically, residues 163-171 (GEVIWFGGK) are cytoplasmic. The helical transmembrane segment at 172–192 (VTTMALSSFLLMVLSSVIAYY) threads the bilayer. Residues 193-206 (GDNAAVKSHDDAFA) lie on the Lumenal side of the membrane. A helical transmembrane segment spans residues 207-227 (LYLGYFWMLTNCFASAAFVLI). The Cytoplasmic segment spans residues 228–241 (MRKRIKLTNFKDFD). Residues 242 to 262 (TMYYNNLLSIPILLICSFIFE) traverse the membrane as a helical segment. At 263–281 (DWSSANVSLNFPADNRVTT) the chain is on the lumenal side. The N-linked (GlcNAc...) asparagine glycan is linked to Asn-268. The helical transmembrane segment at 282-302 (ITAMILSGASSVGISYCSAWC) threads the bilayer. The Cytoplasmic portion of the chain corresponds to 303 to 309 (VRVTSST). The helical transmembrane segment at 310–329 (TYSMVGALNKLPIALSGLIF) threads the bilayer. The Lumenal segment spans residues 330-332 (FEA). Residues 333–355 (AVNFWSVSSIFVGFGAGLVYAVA) form a helical membrane-spanning segment. Residues 356-371 (KQKQQKEQSQQLPTTK) lie on the Cytoplasmic side of the membrane.

It belongs to the TPT transporter family. SLC35D subfamily. Homooligomer.

Its subcellular location is the golgi apparatus membrane. It localises to the cytoplasmic vesicle membrane. It is found in the endoplasmic reticulum membrane. Involved in the import of GDP-mannose from the cytoplasm into the Golgi lumen. Involved in hyphal formation. This chain is GDP-mannose transporter (VRG4), found in Candida albicans (strain SC5314 / ATCC MYA-2876) (Yeast).